A 596-amino-acid chain; its full sequence is SUN domain-containing protein 4 (596 aa).

A helical transmembrane segment spans residues 28 to 48 (VSLSLVFLIWGLVFLSTLWIS). Disordered regions lie at residues 58-98 (LVDS…LSSD) and 139-158 (KQSE…TTGS). Over residues 66–77 (EPDDERADETAE) the composition is skewed to acidic residues. Composition is skewed to polar residues over residues 80–95 (DATS…NPGL) and 141–158 (SEIN…TTGS). Residues 179–343 (SNSRDKSLSG…SLLEVYGVDA (165 aa)) form the SUN domain. The span at 366 to 396 (DTEQKEKKTMQAKESFESDEDKSKQKEKEQE) shows a compositional bias: basic and acidic residues. The segment at 366–410 (DTEQKEKKTMQAKESFESDEDKSKQKEKEQEASPENAVVKDEVSL) is disordered. Positions 475–544 (ASKREKEVET…LERLEWMEKK (70 aa)) form a coiled coil. A run of 2 helical transmembrane segments spans residues 545-565 (GVVV…AVVF) and 576-596 (GGLA…ILSL).

In terms of assembly, forms homomers and heteromers with SUN3. Interacts with SUN1, SUN2 and TIK.

The protein localises to the nucleus membrane. Its subcellular location is the endoplasmic reticulum membrane. In terms of biological role, encodes a member of the mid-SUN subfamily of SUN-domain proteins that is localized to both the nuclear envelope and the ER. It is involved in early seed development and nuclear morphology. [TAIR]. The polypeptide is SUN domain-containing protein 4 (Arabidopsis thaliana (Mouse-ear cress)).